Here is a 116-residue protein sequence, read N- to C-terminus: Putative gamma-glutamylcyclotransferase PH0828 (116 aa).

Position 13–16 (13–16) interacts with substrate; sequence YGTL. E76 functions as the Proton acceptor in the catalytic mechanism.

The protein belongs to the gamma-glutamylcyclotransferase family.

Putative gamma-glutamylcyclotransferase. This chain is Putative gamma-glutamylcyclotransferase PH0828, found in Pyrococcus horikoshii (strain ATCC 700860 / DSM 12428 / JCM 9974 / NBRC 100139 / OT-3).